A 758-amino-acid polypeptide reads, in one-letter code: Relaxin receptor 1 (758 aa).

Over 1–409 (MTSGPFFFCI…ENLLASIIQR (409 aa)) the chain is Extracellular. An LDL-receptor class A domain is found at 26 to 63 (SCPLGSFPCGNMSRCLPQLLHCNGVDDCGNRADEDHCG). 3 cysteine pairs are disulfide-bonded: Cys-27–Cys-40, Cys-34–Cys-53, and Cys-47–Cys-62. The N-linked (GlcNAc...) asparagine glycan is linked to Asn-36. Ca(2+)-binding residues include Leu-45, Asn-48, Val-50, Asp-52, Asp-58, and Glu-59. N-linked (GlcNAc...) asparagine glycosylation is present at Asn-127. 10 LRR repeats span residues 127–148 (NVTV…GFRK), 151–172 (ELQK…AFRG), 175–196 (SLTK…VFED), 199–220 (RLEW…TFYG), 223–244 (SLIL…PLCQ), 248–269 (RLHW…TFIS), 272–293 (NLTV…AFTH), 296–317 (KLDE…IFKD), 320–341 (ELSQ…QFDC), and 344–365 (KLKS…MFRP). N-linked (GlcNAc...) asparagine glycosylation is found at Asn-264 and Asn-272. Residue Asn-325 is glycosylated (N-linked (GlcNAc...) asparagine). A glycan (N-linked (GlcNAc...) asparagine) is linked at Asn-368. Residues 410-430 (VFVWVVSAITCFGNIFVICMR) form a helical membrane-spanning segment. At 431–443 (PYIRSENKLHAMS) the chain is on the cytoplasmic side. The helical transmembrane segment at 444–464 (IISLCCADCLMGVYLFVIGAF) threads the bilayer. Over 465 to 486 (DLKFRGEYNKHAQPWMESVHCQ) the chain is Extracellular. A disulfide bond links Cys-485 and Cys-563. The chain crosses the membrane as a helical span at residues 487–507 (FMGSLAILSTEVSVLLLTFLT). The Cytoplasmic portion of the chain corresponds to 508–527 (LEKYICIVYPFRCLRPRKCR). A helical membrane pass occupies residues 528-548 (TITVLIFIWIIGFIVAFAPLG). Topologically, residues 549-577 (NKEFFKNYYGTNGVCFPLHSEDTGSTGAQ) are extracellular. Residues 578-598 (IYSVVIFLGINLVAFIIIVFS) traverse the membrane as a helical segment. Residues 599–629 (YGSMFYSVHQSSVTVTEIQKQVKKEVVLAKR) are Cytoplasmic-facing. The helical transmembrane segment at 630-650 (FFFIVFTDALCWIPIFILKFL) threads the bilayer. A topological domain (extracellular) is located at residue Ser-651. Residues 652–672 (LLQVEIPDSITSWVVIFILPI) form a helical membrane-spanning segment. Residues 673 to 758 (NSALNPIIYT…SQSSRLNSYS (86 aa)) are Cytoplasmic-facing.

This sequence belongs to the G-protein coupled receptor 1 family. In terms of assembly, interacts with C1QTNF8.

The protein localises to the cell membrane. In terms of biological role, receptor for relaxins. The activity of this receptor is mediated by G proteins leading to stimulation of adenylate cyclase and an increase of cAMP. Binding of the ligand may also activate a tyrosine kinase pathway that inhibits the activity of a phosphodiesterase that degrades cAMP. The protein is Relaxin receptor 1 (Rxfp1) of Mus musculus (Mouse).